The chain runs to 156 residues: Peroxisomal membrane associated protein 20 (156 aa).

A Thioredoxin domain is found at 2-156 (VAVGSTLPKV…SSADKVLSSL (155 aa)). The active-site Cysteine sulfenic acid (-SOH) intermediate is cysteine 43.

Belongs to the peroxiredoxin family. Prx5 subfamily. As to quaternary structure, homodimer; disulfide-linked, upon oxidation.

The protein resides in the cytoplasm. The protein localises to the nucleus. May act as a chaperone rather than a peroxidase. Has no thioredoxin-dependent peroxidase activity. Shows weak chaperone activity. In Schizosaccharomyces pombe (strain 972 / ATCC 24843) (Fission yeast), this protein is Peroxisomal membrane associated protein 20.